Reading from the N-terminus, the 336-residue chain is GTP 3',8-cyclase (336 aa).

The Radical SAM core domain occupies 17-238 (GFSRRFHYLR…WTQQNRNLTD (222 aa)). Residue Arg26 participates in GTP binding. [4Fe-4S] cluster-binding residues include Cys33 and Cys37. Tyr39 is a binding site for S-adenosyl-L-methionine. Cys40 provides a ligand contact to [4Fe-4S] cluster. Arg75 contributes to the GTP binding site. Gly79 contributes to the S-adenosyl-L-methionine binding site. Position 106 (Thr106) interacts with GTP. Residue Ser130 coordinates S-adenosyl-L-methionine. Lys167 contributes to the GTP binding site. Position 201 (Met201) interacts with S-adenosyl-L-methionine. The [4Fe-4S] cluster site is built by Cys264 and Cys267. 269–271 (RLR) is a binding site for GTP. Cys281 contacts [4Fe-4S] cluster.

The protein belongs to the radical SAM superfamily. MoaA family. Monomer and homodimer. Requires [4Fe-4S] cluster as cofactor.

The enzyme catalyses GTP + AH2 + S-adenosyl-L-methionine = (8S)-3',8-cyclo-7,8-dihydroguanosine 5'-triphosphate + 5'-deoxyadenosine + L-methionine + A + H(+). It functions in the pathway cofactor biosynthesis; molybdopterin biosynthesis. Catalyzes the cyclization of GTP to (8S)-3',8-cyclo-7,8-dihydroguanosine 5'-triphosphate. This is GTP 3',8-cyclase from Tolumonas auensis (strain DSM 9187 / NBRC 110442 / TA 4).